A 194-amino-acid chain; its full sequence is NADH-quinone oxidoreductase subunit B 1 (194 aa).

Positions 1 to 12 are enriched in polar residues; sequence MGVTPVSNQPLV. Positions 1–23 are disordered; it reads MGVTPVSNQPLVAQQPKGIIDPS. [4Fe-4S] cluster-binding residues include Cys-73, Cys-74, Cys-138, and Cys-168.

The protein belongs to the complex I 20 kDa subunit family. As to quaternary structure, NDH-1 is composed of 14 different subunits. Subunits NuoB, C, D, E, F, and G constitute the peripheral sector of the complex. The cofactor is [4Fe-4S] cluster.

The protein resides in the cell inner membrane. It catalyses the reaction a quinone + NADH + 5 H(+)(in) = a quinol + NAD(+) + 4 H(+)(out). Functionally, NDH-1 shuttles electrons from NADH, via FMN and iron-sulfur (Fe-S) centers, to quinones in the respiratory chain. The immediate electron acceptor for the enzyme in this species is believed to be ubiquinone. Couples the redox reaction to proton translocation (for every two electrons transferred, four hydrogen ions are translocated across the cytoplasmic membrane), and thus conserves the redox energy in a proton gradient. This is NADH-quinone oxidoreductase subunit B 1 from Rhizobium etli (strain ATCC 51251 / DSM 11541 / JCM 21823 / NBRC 15573 / CFN 42).